Here is a 209-residue protein sequence, read N- to C-terminus: Floral homeotic protein GLOBOSA (209 aa).

The 55-residue stretch at 3 to 57 (RGKIEIKRIENSSNRQVTYSKRRNGILKKAKEISVLCDARVSVIIFASSGKMHEF) folds into the MADS-box domain. The region spanning 82 to 173 (HENLDNEINK…QLEIASMNRN (92 aa)) is the K-box domain.

Expressed mainly in floral organs and, within the flower, expression is restricted to petals and stamens.

It localises to the nucleus. Its function is as follows. Transcription factor involved in the genetic control of flower development. Acts in conjunction with DEFICIENS (defA). In Nicotiana tabacum (Common tobacco), this protein is Floral homeotic protein GLOBOSA (GLO).